Here is a 211-residue protein sequence, read N- to C-terminus: Guanylate kinase (211 aa).

Positions 5-184 (GLLIVFSGPS…AAERVKRIIE (180 aa)) constitute a Guanylate kinase-like domain. Residue 12 to 19 (GPSGVGKG) coordinates ATP.

Belongs to the guanylate kinase family.

The protein resides in the cytoplasm. The enzyme catalyses GMP + ATP = GDP + ADP. Essential for recycling GMP and indirectly, cGMP. The polypeptide is Guanylate kinase (Streptococcus pyogenes serotype M3 (strain SSI-1)).